The sequence spans 55 residues: Large ribosomal subunit protein bL33 (55 aa).

A compositionally biased stretch (basic and acidic residues) spans 1 to 11 (MAKSGRDKIKL). Residues 1 to 27 (MAKSGRDKIKLESTAGTGHFYTTTKNK) form a disordered region. The segment covering 14–24 (TAGTGHFYTTT) has biased composition (polar residues).

Belongs to the bacterial ribosomal protein bL33 family.

The sequence is that of Large ribosomal subunit protein bL33 from Herminiimonas arsenicoxydans.